Reading from the N-terminus, the 1016-residue chain is Vacuolar membrane protease (1016 aa).

Residues 1–36 (MAETESGTGNSPSHRLSETSNASGNRSHQQSKQIAS) form a disordered region. The Cytoplasmic portion of the chain corresponds to 1 to 57 (MAETESGTGNSPSHRLSETSNASGNRSHQQSKQIASYKSSKPNVFIRFIRAIFGYRK). Residues 58–78 (TSVTLFVFITIIATLILVELS) traverse the membrane as a helical segment. Residues 79 to 408 (NSLDFSVKLP…FVIPASQLVL (330 aa)) lie on the Vacuolar side of the membrane. N-linked (GlcNAc...) asparagine glycans are attached at residues Asn-147 and Asn-177. 2 residues coordinate Zn(2+): His-191 and Asp-203. Glu-238 serves as the catalytic Proton acceptor. Positions 239, 264, and 337 each coordinate Zn(2+). A helical membrane pass occupies residues 409–429 (INVTCLAVIPLISLPLLVIIF). Topologically, residues 430–438 (NYKKNWHIG) are cytoplasmic. The helical transmembrane segment at 439-459 (FINAIKFPVSLVLSICILNII) threads the bilayer. The Vacuolar segment spans residues 460-481 (THNVIASINEFLPNSSYDSIVS). Asn-473 is a glycosylation site (N-linked (GlcNAc...) asparagine). Residues 482 to 502 (TLYSLFLLLNYLFLNGINFIF) traverse the membrane as a helical segment. Residues 503–511 (KGYKGLYHD) are Cytoplasmic-facing. The chain crosses the membrane as a helical span at residues 512 to 532 (EKLILIIQTSFIYWVLLIVST). The Vacuolar segment spans residues 533–547 (NKLSKNKIGNDHTGE). The helical transmembrane segment at 548 to 568 (FPLIMLFLLQSIGALFGLFSW) threads the bilayer. At 569-646 (SFKKTTPDEL…SFSYDWSIQY (78 aa)) the chain is on the cytoplasmic side. Residues 598–622 (YGSNEAELESGEPISSNSSVSLNSS) are disordered. Residues 612 to 622 (SSNSSVSLNSS) show a composition bias toward low complexity. A helical transmembrane segment spans residues 647–667 (VVIVPLSSLIVYNTGSLLLSG). At 668 to 681 (LNKSIQESLNAEKL) the chain is on the vacuolar side. N-linked (GlcNAc...) asparagine glycosylation occurs at Asn-669. A helical membrane pass occupies residues 682–702 (IFDLIQLVAVTLAIPFLPFIF). Over 703–706 (KINR) the chain is Cytoplasmic. Residues 707 to 727 (LLVTALVLVFCSGFISIFLKS) traverse the membrane as a helical segment. The Vacuolar portion of the chain corresponds to 728-1016 (PFDQLNPLKL…LVSVSKYVEI (289 aa)). N-linked (GlcNAc...) asparagine glycans are attached at residues Asn-778, Asn-821, Asn-850, Asn-875, and Asn-977.

Belongs to the peptidase M28 family. The cofactor is Zn(2+).

The protein resides in the vacuole membrane. Functionally, may be involved in vacuolar sorting and osmoregulation. The sequence is that of Vacuolar membrane protease from Debaryomyces hansenii (strain ATCC 36239 / CBS 767 / BCRC 21394 / JCM 1990 / NBRC 0083 / IGC 2968) (Yeast).